Here is a 689-residue protein sequence, read N- to C-terminus: E3 ubiquitin-protein ligase RNF43 (689 aa).

The first 27 residues, 1–27, serve as a signal peptide directing secretion; the sequence is MNRARLQLASLWLLLTVTLQAVASAMG. Topologically, residues 28-191 are extracellular; the sequence is TTEREMDVKA…VQEQPKWLHH (164 aa). N-linked (GlcNAc...) asparagine glycosylation is found at asparagine 56 and asparagine 86. Cysteine 85 and cysteine 113 are disulfide-bonded. A helical transmembrane segment spans residues 192 to 212; it reads DIWILLTVAGTVMFFVLYAVA. Topologically, residues 213 to 689 are cytoplasmic; sequence RLLCRQPPPQ…EIEAVCEHAV (477 aa). The RING-type; atypical zinc-finger motif lies at 268 to 308; it reads CAICLEEFTDGQELRILPCCHEYHLGCVDPWLRQNHTCPLC. 3 disordered regions span residues 386 to 430, 445 to 467, and 492 to 639; these read QMRT…HGSS, TSSSSVHSSQSNQEDSSPPALAS, and VHFH…MSES. Composition is skewed to low complexity over residues 408 to 430 and 446 to 461; these read DSSGYLPDDPGSDSSSGPCHGSS and SSSSVHSSQSNQEDSS. 2 stretches are compositionally biased toward basic residues: residues 492–504 and 512–523; these read VHFHQHRHHHYRR and SHPHRSKRRTKV. A compositionally biased stretch (polar residues) spans 574–588; sequence QQSMPQAASVVQGSS.

It belongs to the ZNRF3 family.

It is found in the cell membrane. The protein resides in the endoplasmic reticulum membrane. The protein localises to the nucleus envelope. The enzyme catalyses S-ubiquitinyl-[E2 ubiquitin-conjugating enzyme]-L-cysteine + [acceptor protein]-L-lysine = [E2 ubiquitin-conjugating enzyme]-L-cysteine + N(6)-ubiquitinyl-[acceptor protein]-L-lysine.. It participates in protein modification; protein ubiquitination. E3 ubiquitin-protein ligase that acts as a negative regulator of the Wnt signaling pathway by mediating the ubiquitination, endocytosis and subsequent degradation of Wnt receptor complex components Frizzled. Acts on both canonical and non-canonical Wnt signaling pathway. Along with RSPO2 and ZNRF3, constitutes a master switch that governs limb specification. This is E3 ubiquitin-protein ligase RNF43 (rnf43) from Xenopus tropicalis (Western clawed frog).